Reading from the N-terminus, the 43-residue chain is Defensin-A (43 aa).

3 disulfide bridges follow: Cys3/Cys34, Cys20/Cys39, and Cys24/Cys41.

It is found in the secreted. Its function is as follows. Antibacterial protein. Strong activity against the Gram-positive bacteria M.luteus, B.megaterium and S.aureus. Reduced activity against Gram-positive bacterium B.subtilis and weak activity against Gram-negative bacterium X.japonicus. No detectable activity against the Gram-negative bacteria E.asbriae, E.coli, P.aeruginosa and S.marcescens. The sequence is that of Defensin-A from Anomala cuprea (Cupreous chafer beetle).